The primary structure comprises 142 residues: Large ribosomal subunit protein uL13 (142 aa).

It belongs to the universal ribosomal protein uL13 family. In terms of assembly, part of the 50S ribosomal subunit.

Functionally, this protein is one of the early assembly proteins of the 50S ribosomal subunit, although it is not seen to bind rRNA by itself. It is important during the early stages of 50S assembly. This chain is Large ribosomal subunit protein uL13, found in Stenotrophomonas maltophilia (strain R551-3).